A 1545-amino-acid chain; its full sequence is ATP-binding cassette sub-family C member 2 (1545 aa).

Residues 1 to 27 (MLEKFCNSTFWNSSFLDSPEADLPLCF) are Extracellular-facing. N-linked (GlcNAc...) asparagine glycosylation is found at asparagine 7 and asparagine 12. A helical transmembrane segment spans residues 28–48 (EQTVLVWIPLGYLWLLAPWQL). Topologically, residues 49 to 68 (LHVYKSRTKRSSTTKLYLAK) are cytoplasmic. A helical transmembrane segment spans residues 69-89 (QVFVGFLLILAAIELALVLTE). The Extracellular segment spans residues 90 to 93 (DSGQ). Residues 94 to 114 (ATVPAVRYTNPSLYLGTWLLV) form a helical membrane-spanning segment. Residues 115–126 (LLIQYSRQWCVQ) lie on the Cytoplasmic side of the membrane. The helical transmembrane segment at 127-147 (KNSWFLSLFWILSILCGTFQF) threads the bilayer. The Extracellular portion of the chain corresponds to 148–165 (QTLIRTLLQGDNSNLAYS). A helical transmembrane segment spans residues 166 to 186 (CLFFISYGFQILILIFSAFSE). Residues 187-313 (NNESSNNPSS…DVPKSWLMKA (127 aa)) are Cytoplasmic-facing. Residues 253–284 (ARRALQRRQEKSSQQNSGARLPGLNKNQSQSQ) are disordered. Phosphoserine occurs at positions 281 and 283. A helical membrane pass occupies residues 314-334 (LFKTFYMVLLKSFLLKLVNDI). Positions 322-605 (LLKSFLLKLV…LPMMISSMLQ (284 aa)) constitute an ABC transmembrane type-1 1 domain. Over 335–360 (FTFVSPQLLKLLISFASDRDTYLWIG) the chain is Extracellular. Residues 361–381 (YLCAILLFTAALIQSFCLQCY) traverse the membrane as a helical segment. Over 382–437 (FQLCFKLGVKVRTAIMASVYKKALTLSNLARKEYTVGETVNLMSVDAQKLMDVTNF) the chain is Cytoplasmic. A helical membrane pass occupies residues 438–458 (MHMLWSSVLQIVLSIFFLWRE). Residues 459–461 (LGP) lie on the Extracellular side of the membrane. The helical transmembrane segment at 462–482 (SVLAGVGVMVLVIPINAILST) threads the bilayer. Over 483–544 (KSKTIQVKNM…NLLAFSQLQC (62 aa)) the chain is Cytoplasmic. Residues 545–565 (VVIFVFQLTPVLVSVVTFSVY) form a helical membrane-spanning segment. Topologically, residues 566–587 (VLVDSNNILDAQKAFTSITLFN) are extracellular. The chain crosses the membrane as a helical span at residues 588 to 608 (ILRFPLSMLPMMISSMLQASV). Over 609–971 (STERLEKYLG…VKFSIYLEYL (363 aa)) the chain is Cytoplasmic. One can recognise an ABC transporter 1 domain in the interval 637-861 (MQFSEASFTW…KGEFAKNLKT (225 aa)). An ATP-binding site is contributed by 671-678 (GPVGSGKS). A phosphoserine mark is found at serine 878, serine 926, serine 930, and serine 938. The helical transmembrane segment at 972–992 (QAIGLFSIFFIILAFVMNSVA) threads the bilayer. The ABC transmembrane type-1 2 domain occupies 979–1264 (IFFIILAFVM…LVRMTSEIET (286 aa)). Residues 993–1033 (FIGSNLWLSAWTSDSKIFNSTDYPASQRDMRVGVYGALGLA) lie on the Extracellular side of the membrane. N-linked (GlcNAc...) asparagine glycosylation occurs at asparagine 1011. The helical transmembrane segment at 1034-1054 (QGIFVFIAHFWSAFGFVHASN) threads the bilayer. Residues 1055–1097 (ILHKQLLNNILRAPMRFFDTTPTGRIVNRFAGDISTVDDTLPQ) lie on the Cytoplasmic side of the membrane. A helical transmembrane segment spans residues 1098-1118 (SLRSWITCFLGIISTLVMICM). Residue alanine 1119 is a topological domain, extracellular. The helical transmembrane segment at 1120-1140 (TPVFTIIVIPLGIIYVSVQMF) threads the bilayer. Over 1141–1211 (YVSTSRQLRR…TSNRWLAIRL (71 aa)) the chain is Cytoplasmic. A helical membrane pass occupies residues 1212 to 1232 (ELVGNLTVFFSALMMVIYRDT). Residues 1233 to 1234 (LS) lie on the Extracellular side of the membrane. Residues 1235–1255 (GDTVGFVLSNALNITQTLNWL) traverse the membrane as a helical segment. Residues 1256 to 1545 (VRMTSEIETN…GIENVNSTKF (290 aa)) are Cytoplasmic-facing. In terms of domain architecture, ABC transporter 2 spans 1300–1534 (IQFNNYQVRY…PGPFYFMAKE (235 aa)). 1334–1341 (GRTGAGKS) provides a ligand contact to ATP. Serine 1438 carries the phosphoserine modification.

This sequence belongs to the ABC transporter superfamily. ABCC family. Conjugate transporter (TC 3.A.1.208) subfamily. In terms of tissue distribution, expressed by polarized cells in liver, kidney and intestine. The highest expression is found in liver. Expressed in small intestine.

It is found in the apical cell membrane. The catalysed reaction is ATP + H2O + xenobioticSide 1 = ADP + phosphate + xenobioticSide 2.. It catalyses the reaction an S-substituted glutathione(in) + ATP + H2O = an S-substituted glutathione(out) + ADP + phosphate + H(+). The enzyme catalyses taurolithocholate 3-sulfate(in) + ATP + H2O = taurolithocholate 3-sulfate(out) + ADP + phosphate + H(+). It carries out the reaction leukotriene C4(in) + ATP + H2O = leukotriene C4(out) + ADP + phosphate + H(+). The catalysed reaction is 17beta-estradiol 17-O-(beta-D-glucuronate)(in) + ATP + H2O = 17beta-estradiol 17-O-(beta-D-glucuronate)(out) + ADP + phosphate + H(+). It catalyses the reaction (4Z,15Z)-bilirubin IXalpha C8-beta-D-glucuronoside(in) + ATP + H2O = (4Z,15Z)-bilirubin IXalpha C8-beta-D-glucuronoside(out) + ADP + phosphate + H(+). The enzyme catalyses (4Z,15Z)-bilirubin IXalpha C8,C12-beta-D-bisglucuronoside(in) + ATP + H2O = (4Z,15Z)-bilirubin IXalpha C8,C12-beta-D-bisglucuronoside(out) + ADP + phosphate + H(+). ATP-dependent transporter of the ATP-binding cassette (ABC) family that binds and hydrolyzes ATP to enable active transport of various substrates including many drugs, toxicants and endogenous compound across cell membranes. Transports a wide variety of conjugated organic anions such as sulfate-, glucuronide- and glutathione (GSH)-conjugates of endo- and xenobiotics substrates. Mediates hepatobiliary excretion of mono- and bis-glucuronidated bilirubin molecules and therefore play an important role in bilirubin detoxification. Also mediates hepatobiliary excretion of others glucuronide conjugates such as 17beta-estradiol 17-glucosiduronic acid and leukotriene C4. Transports sulfated bile salt such as taurolithocholate sulfate. Transports various anticancer drugs, such as anthracycline, vinca alkaloid and methotrexate and HIV-drugs such as protease inhibitors. Confers resistance to several anti-cancer drugs including cisplatin, doxorubicin, epirubicin, methotrexate, etoposide and vincristine. This is ATP-binding cassette sub-family C member 2 from Homo sapiens (Human).